A 24-amino-acid polypeptide reads, in one-letter code: Neurotoxin-2 (24 aa).

The 24-residue stretch at 1-24 folds into the LCN-type CS-alpha/beta domain; sequence EDGYLLNRDTGCKVSCGTCRYCND.

This sequence belongs to the long (4 C-C) scorpion toxin superfamily. Sodium channel inhibitor family. Alpha subfamily. Expressed by the venom gland.

It localises to the secreted. Binds to sodium channels (Nav) and inhibits the inactivation of the activated channels, thereby blocking neuronal transmission. This toxin is active against mammals. This is Neurotoxin-2 from Hottentotta tamulus (Eastern Indian scorpion).